The following is an 850-amino-acid chain: Pierisin (850 aa).

3 Ricin B-type lectin domains span residues 267–409 (GEFM…WNII), 413–560 (FRPI…WDIK), and 564–707 (YQYV…WYLK).

Belongs to the pierisin ADP-ribosyltransferase family.

It carries out the reaction a 2'-deoxyguanosine in DNA + NAD(+) = an N(2)-(ADP-L-ribosyl)-2'-deoxyguanosine in DNA + nicotinamide + H(+). In terms of biological role, ADP-ribosylates double-stranded DNA by targeting the N2 amino group of dG residues. Induces apoptosis in a range of human cell lines. May play a role in destroying cells during pupation and/or defense against parasites. The polypeptide is Pierisin (Pieris brassicae (White butterfly)).